Here is a 144-residue protein sequence, read N- to C-terminus: NADH-ubiquinone oxidoreductase chain 6 (144 aa).

5 helical membrane-spanning segments follow: residues 1 to 21 (MLGS…INVD), 26 to 46 (SFFL…FLHV), 47 to 67 (WFSY…LVYF), 76 to 96 (VVTP…YPFF), and 108 to 128 (FYFS…IFFM).

It belongs to the complex I subunit 6 family.

The protein localises to the mitochondrion membrane. The enzyme catalyses a ubiquinone + NADH + 5 H(+)(in) = a ubiquinol + NAD(+) + 4 H(+)(out). Core subunit of the mitochondrial membrane respiratory chain NADH dehydrogenase (Complex I) that is believed to belong to the minimal assembly required for catalysis. Complex I functions in the transfer of electrons from NADH to the respiratory chain. The immediate electron acceptor for the enzyme is believed to be ubiquinone. The chain is NADH-ubiquinone oxidoreductase chain 6 (ND6) from Ascaris suum (Pig roundworm).